The following is a 486-amino-acid chain: MGNNLLSAKATLPVYDLNNLAPRIVHLGFGAFHRAHQGVYADILATEHFSDWGYYEVNLIGGEQQIADLQQQDNLYTVAEMSADVWTARVVGVVKKALHVQIDGLETVLAAMCEPQIAIVSLTITEKGYFHSPATGQLMLDHPMVAADVQNPHQPKTATGVIVEALARRKAAGLPAFTVMSCDNMPENGHVMRDVVTSYAQAVDVKLAQWIEDNVTFPSTMVDRIVPAVTEDTLAKIEQLTGVRDPAGVACEPFRQWVIEDNFVAGRPEWEKAGAELVSDVLPYEEMKLRMLNGSHSFLAYLGYLAGYQHINDCMEDEHYRYAAYGLMLQEQAPTLKVQGVDLQDYANRLIARYSNPALRHRTWQIAMDGSQKLPQRMLDSVRWHLAHDSKFDLLALGVAGWMRYVGGVDEQGNPIEISDPLLPVIQKAVQSSAEGKARVQSLLAIKAIFGDDLPDNSLFTARVTETYLSLLAHGAKATVAKYSVK.

24–35 (IVHLGFGAFHRA) lines the NAD(+) pocket.

This sequence belongs to the mannitol dehydrogenase family. UxuB subfamily.

This is an uncharacterized protein from Escherichia coli (strain K12).